The chain runs to 287 residues: Inorganic pyrophosphatase (287 aa).

A diphosphate-binding site is contributed by R79. The Mg(2+) site is built by D116, D121, and D153.

This sequence belongs to the PPase family. It depends on Mg(2+) as a cofactor.

Its subcellular location is the cytoplasm. The catalysed reaction is diphosphate + H2O = 2 phosphate + H(+). This chain is Inorganic pyrophosphatase (IPP1), found in Zygosaccharomyces bailii.